The primary structure comprises 292 residues: Polyketide transferase af380 (292 aa).

The abhydrolase domain stretch occupies residues 46–267 (DVAVWFQQQG…FDLVAGRGHM (222 aa)).

Belongs to the polyketide transferase af380 family.

It carries out the reaction fumagillol + dodecapentaneoyl-[polyketide synthase] = prefumagillin + holo-[polyketide synthase]. It participates in secondary metabolite biosynthesis; terpenoid biosynthesis. In terms of biological role, polyketide transferase; part of the gene cluster that mediates the biosynthesis of fumagillin, a meroterpenoid that has numerous biological activities including irreversible inhibition of human type 2 methionine aminopeptidase (METAP2). Within the pathway, the polyketide transferase af380 catalyzes the transfer of a dodecapentaenoyl group synthesized by the polyketide synthase af370 onto 5R-hydroxy-seco-sesquiterpene to produce prefumagillin. The pathway begins with the conversion of farnesyl pyrophosphate (FPP) to beta-trans-bergamotene by the membrane-bound beta-trans-bergamotene synthase af520. The multifunctional cytochrome P450 monooxygenase af510 then converts beta-trans-bergamotene into 5-keto-demethoxyfumagillol via several oxydation steps. 5-keto-demethoxyfumagillol is then subjected to successive C-6 hydroxylation and O-methylation by the dioxygenase af480 and O-methyltransferase af390-400, respectively, to yield 5-keto-fumagillol, which is then stereoselectively reduced by the keto-reductase af490 to 5R-hydroxy-seco-sesquiterpene. The next step is the polyketide transferase af380-catalyzed transfer of a dodecapentaenoyl group synthesized by the polyketide synthase af370 onto 5R-hydroxy-seco-sesquiterpene which leads to the production of prefumagillin. Finally, oxidative cleavage by the monooxygenase af470 converts prefumagillin to fumagillin. This chain is Polyketide transferase af380, found in Aspergillus fumigatus (strain ATCC MYA-4609 / CBS 101355 / FGSC A1100 / Af293) (Neosartorya fumigata).